A 322-amino-acid polypeptide reads, in one-letter code: Arginase-1 (322 aa).

Residues methionine 1–glycine 27 form a disordered region. A Phosphoserine modification is found at serine 7. Residue lysine 17 is modified to N6-succinyllysine. Serine 62 bears the Phosphoserine mark. Lysine 75 is modified (N6-succinyllysine). Residues histidine 101, aspartate 124, histidine 126, and aspartate 128 each coordinate Mn(2+). Substrate-binding positions include histidine 126–asparagine 130, threonine 137–asparagine 139, and aspartate 183. A Phosphoserine modification is found at serine 217. The Mn(2+) site is built by aspartate 232 and aspartate 234. Substrate contacts are provided by threonine 246 and glutamate 277.

It belongs to the arginase family. In terms of assembly, homotrimer. Interacts with CMTM6. Mn(2+) serves as cofactor.

Its subcellular location is the cytoplasm. The catalysed reaction is L-arginine + H2O = urea + L-ornithine. It participates in nitrogen metabolism; urea cycle; L-ornithine and urea from L-arginine: step 1/1. The polypeptide is Arginase-1 (ARG1) (Bos taurus (Bovine)).